We begin with the raw amino-acid sequence, 288 residues long: Homoserine kinase (288 aa).

78–88 (PLARGLGSSSS) provides a ligand contact to ATP.

It belongs to the GHMP kinase family. Homoserine kinase subfamily.

It localises to the cytoplasm. The catalysed reaction is L-homoserine + ATP = O-phospho-L-homoserine + ADP + H(+). Its pathway is amino-acid biosynthesis; L-threonine biosynthesis; L-threonine from L-aspartate: step 4/5. In terms of biological role, catalyzes the ATP-dependent phosphorylation of L-homoserine to L-homoserine phosphate. This Streptococcus agalactiae serotype III (strain NEM316) protein is Homoserine kinase.